Here is a 270-residue protein sequence, read N- to C-terminus: 3-phenylpropionate-dihydrodiol/cinnamic acid-dihydrodiol dehydrogenase (270 aa).

10-34 lines the NAD(+) pocket; sequence FITGGGSGLGLALVERFIEEGAQVA. Ser143 contributes to the substrate binding site. Tyr156 serves as the catalytic Proton acceptor.

Belongs to the short-chain dehydrogenases/reductases (SDR) family.

It catalyses the reaction 3-(cis-5,6-dihydroxycyclohexa-1,3-dien-1-yl)propanoate + NAD(+) = 3-(2,3-dihydroxyphenyl)propanoate + NADH + H(+). It carries out the reaction (2E)-3-(cis-5,6-dihydroxycyclohexa-1,3-dien-1-yl)prop-2-enoate + NAD(+) = (2E)-3-(2,3-dihydroxyphenyl)prop-2-enoate + NADH + H(+). It functions in the pathway aromatic compound metabolism; 3-phenylpropanoate degradation. Converts 3-phenylpropionate-dihydrodiol (PP-dihydrodiol) and cinnamic acid-dihydrodiol (CI-dihydrodiol) into 3-(2,3-dihydroxylphenyl)propanoic acid (DHPP) and 2,3-dihydroxicinnamic acid (DHCI), respectively. In Escherichia coli O8 (strain IAI1), this protein is 3-phenylpropionate-dihydrodiol/cinnamic acid-dihydrodiol dehydrogenase.